The primary structure comprises 501 residues: Arabinose import ATP-binding protein AraG (501 aa).

ABC transporter domains are found at residues 4–239 (LEFN…MVGR) and 252–495 (LGDN…LPDK). 36–43 (GENGAGKS) is an ATP binding site.

It belongs to the ABC transporter superfamily. Arabinose importer (TC 3.A.1.2.2) family. As to quaternary structure, the complex is composed of two ATP-binding proteins (AraG), two transmembrane proteins (AraH) and a solute-binding protein (AraF).

The protein resides in the cell inner membrane. It carries out the reaction L-arabinose(out) + ATP + H2O = L-arabinose(in) + ADP + phosphate + H(+). In terms of biological role, part of the ABC transporter complex AraFGH involved in arabinose import. Responsible for energy coupling to the transport system. This Rhizobium etli (strain ATCC 51251 / DSM 11541 / JCM 21823 / NBRC 15573 / CFN 42) protein is Arabinose import ATP-binding protein AraG.